The chain runs to 384 residues: Protein V (384 aa).

Disordered stretches follow at residues 1 to 23 (MDQD…GGRE) and 38 to 318 (SEPT…KKGH). The span at 7-20 (ILKEDSEVEREAPG) shows a compositional bias: basic and acidic residues. Over residues 50 to 59 (LHNTINTPQG) the composition is skewed to polar residues. S68 is modified (phosphoserine; by host). A compositionally biased stretch (basic and acidic residues) spans 83–101 (RSGEESRVSGRTSKPEAEA). Phosphoserine; by host is present on S125. Residues 150 to 168 (GIEDENREMAAHPDKRGED) are compositionally biased toward basic and acidic residues. Over residues 191–206 (ASNNGRSMEPGSSHSA) the composition is skewed to polar residues. S192, S249, S257, and S260 each carry phosphoserine; by host. Residues H318, C337, C341, C353, C355, C358, C362, and C365 each contribute to the Zn(2+) site.

It belongs to the paramyxoviruses V protein family. In terms of assembly, interacts with host IFIH1/MDA5 and DHX58/LGP2. Interacts with host IRF3. Interacts with host RIGI regulatory protein (via CARDs domain) and host TRIM25 (via SPRY domain); these interactions prevent TRIM25-mediated ubiquitination of RIG-I and disrupts downstream RIG-I signaling.

Its subcellular location is the host cytoplasm. Its function is as follows. Plays an essential role in the inhibition of host immune response. Prevents the establishment of cellular antiviral state by blocking interferon-alpha/beta (IFN-alpha/beta) production and signaling pathway. Interacts with host IFIH1/MDA5 and DHX58/LGP2 to inhibit the transduction pathway involved in the activation of IFN-beta promoter, thus protecting the virus against cell antiviral state. Also interacts with and inhibits host IRF3. Blocks the type I interferon signaling pathway by disrupting the RIG-I signaling pathway. This is Protein V (P/V/C) from Sendai virus (strain Harris) (SeV).